We begin with the raw amino-acid sequence, 333 residues long: Ornithine carbamoyltransferase (333 aa).

Residues 56-59 (STRT), arginine 107, and 134-137 (HPTQ) contribute to the carbamoyl phosphate site. Residues asparagine 167, aspartate 231, and 235 to 236 (SM) each bind L-ornithine. Carbamoyl phosphate contacts are provided by residues 273–274 (CL) and arginine 318.

Belongs to the aspartate/ornithine carbamoyltransferase superfamily. OTCase family.

Its subcellular location is the cytoplasm. It catalyses the reaction carbamoyl phosphate + L-ornithine = L-citrulline + phosphate + H(+). Its pathway is amino-acid degradation; L-arginine degradation via ADI pathway; carbamoyl phosphate from L-arginine: step 2/2. Reversibly catalyzes the transfer of the carbamoyl group from carbamoyl phosphate (CP) to the N(epsilon) atom of ornithine (ORN) to produce L-citrulline. In Clostridium botulinum (strain Langeland / NCTC 10281 / Type F), this protein is Ornithine carbamoyltransferase.